Reading from the N-terminus, the 465-residue chain is Sensor histidine kinase ZraS (465 aa).

The Cytoplasmic portion of the chain corresponds to 1–14; it reads MSFIRLHKDAAATW. Residues 15–35 form a helical membrane-spanning segment; the sequence is LSRLLPAAIFILVGLFSIMVI. Over 36–202 the chain is Periplasmic; sequence RDYGRESAAA…AATQAREWRN (167 aa). A helical membrane pass occupies residues 203–223; it reads TLIVLSALAAVLLATLLAFFW. The Cytoplasmic segment spans residues 224-465; that stretch reads HQRYQRSHRE…WLPVIARQQD (242 aa). The region spanning 253–461 is the Histidine kinase domain; the sequence is GVAHEIRNPL…VFTIWLPVIA (209 aa). His-256 carries the phosphohistidine; by autocatalysis modification.

In terms of processing, autophosphorylated.

It is found in the cell inner membrane. It carries out the reaction ATP + protein L-histidine = ADP + protein N-phospho-L-histidine.. With respect to regulation, activity of the ZraS/ZraR two-component system is repressed by the zinc-bound form of ZraP, which probably interacts with the periplasmic region of ZraS. In terms of biological role, part of the Zra signaling pathway, an envelope stress response (ESR) system composed of the periplasmic accessory protein ZraP, the histidine kinase ZraS and the transcriptional regulator ZraR. The ZraPSR system contributes to antibiotic resistance and is important for membrane integrity in the presence of membrane-targeting biocides. ZraS is a member of the two-component regulatory system ZraS/ZraR. Functions as a membrane-associated sensor kinase that phosphorylates ZraR in response to high concentrations of Zn(2+) or Pb(2+) in the medium. The sequence is that of Sensor histidine kinase ZraS from Salmonella typhimurium (strain LT2 / SGSC1412 / ATCC 700720).